A 394-amino-acid chain; its full sequence is Chaperone protein DnaJ (394 aa).

In terms of domain architecture, J spans 4–68 (DYYEILGVSR…ELRARYDRFG (65 aa)). The segment at 136 to 218 (GGEKQIRISH…CNGEGLAQTT (83 aa)) adopts a CR-type zinc-finger fold. The Zn(2+) site is built by cysteine 149, cysteine 152, cysteine 166, cysteine 169, cysteine 192, cysteine 195, cysteine 206, and cysteine 209. 4 CXXCXGXG motif repeats span residues 149-156 (CPVCGGSG), 166-173 (CPTCGGAG), 192-199 (CPTCGGAG), and 206-213 (CYNCNGEG).

It belongs to the DnaJ family. As to quaternary structure, homodimer. Zn(2+) serves as cofactor.

Its subcellular location is the cytoplasm. Its function is as follows. Participates actively in the response to hyperosmotic and heat shock by preventing the aggregation of stress-denatured proteins and by disaggregating proteins, also in an autonomous, DnaK-independent fashion. Unfolded proteins bind initially to DnaJ; upon interaction with the DnaJ-bound protein, DnaK hydrolyzes its bound ATP, resulting in the formation of a stable complex. GrpE releases ADP from DnaK; ATP binding to DnaK triggers the release of the substrate protein, thus completing the reaction cycle. Several rounds of ATP-dependent interactions between DnaJ, DnaK and GrpE are required for fully efficient folding. Also involved, together with DnaK and GrpE, in the DNA replication of plasmids through activation of initiation proteins. In Synechococcus sp. (strain JA-3-3Ab) (Cyanobacteria bacterium Yellowstone A-Prime), this protein is Chaperone protein DnaJ.